The primary structure comprises 100 residues: Succinate dehydrogenase assembly factor 4, mitochondrial (100 aa).

Residues M1 to P31 constitute a mitochondrion transit peptide. The segment at D24–F100 is disordered. 2 stretches are compositionally biased toward basic and acidic residues: residues L36–E68 and P85–F100.

This sequence belongs to the SDHAF4 family. Interacts with sdh1 in its FAD-bound form.

It is found in the mitochondrion matrix. Its function is as follows. Plays an essential role in the assembly of succinate dehydrogenase (SDH), an enzyme complex (also referred to as respiratory complex II) that is a component of both the tricarboxylic acid (TCA) cycle and the mitochondrial electron transport chain, and which couples the oxidation of succinate to fumarate with the reduction of ubiquinone (coenzyme Q) to ubiquinol. Binds to the flavoprotein subunit sdh1 in its FAD-bound form, blocking the generation of excess reactive oxygen species (ROS) and facilitating its assembly with the iron-sulfur protein subunit sdh2 into the SDH catalytic dimer. This chain is Succinate dehydrogenase assembly factor 4, mitochondrial, found in Schizosaccharomyces pombe (strain 972 / ATCC 24843) (Fission yeast).